The chain runs to 330 residues: MARKGVDVAVALVLVALAAFPAVHSIGVCNGVLGNNLPAPSDVVTLYRSKRIDAMRIYEPESKVLTALSGTGIAVLMDVGPALPSLASSPSAAAAWVKANVSSFPGVSFRYIAVRNEVMDSAGQSTILPAMRNVQRALAAAGSPIKVSTSVRFDVFNNTSPPSNGVLADKSGFLRPILNFLARPARPLLANVYPYFAYKGNPRDIQLTFATFVPGSTTVNDNGLTYTNLFDAMVDSIYAALEKAGTPGVKVVISESGWPSDQGFGATAQNARAYNQGLINHVGNGSPKKAGALESYIFAMFNENLKDGDELEKNFGLFKPNMSPAYAITF.

An N-terminal signal peptide occupies residues 1–25 (MARKGVDVAVALVLVALAAFPAVHS). Glu-117 (proton donor) is an active-site residue. Glu-255 serves as the catalytic Nucleophile.

Belongs to the glycosyl hydrolase 17 family.

The enzyme catalyses Hydrolysis of (1-&gt;3)-beta-D-glucosidic linkages in (1-&gt;3)-beta-D-glucans.. Functionally, may provide a degree of protection against microbial invasion of germinated barley grain through its ability to degrade fungal cell wall polysaccharides. The protein is Glucan endo-1,3-beta-glucosidase GIII of Hordeum vulgare (Barley).